The sequence spans 559 residues: Leucine-rich repeat protein soc-2 (559 aa).

Residues 1–17 (METSKEFEFRPAKETSR) are compositionally biased toward basic and acidic residues. The tract at residues 1–55 (METSKEFEFRPAKETSRSKSPGGIVGRLSNFARNKARHSLSEKGSNSVGGSGGAG) is disordered. LRR repeat units follow at residues 74-95 (QDQR…IKEL), 97-118 (QLTE…IGQL), 120-142 (NLKK…ASLE), 143-164 (SLET…IYKI), 166-187 (SLET…IGNL), 189-210 (KLKM…IGKL), 212-233 (SLVV…IGDC), 235-256 (SLTQ…IGKL), 258-279 (NLVR…LESC), 281-302 (QLEE…LLTM), 305-326 (KIHT…GPQQ), 329-350 (STVT…IFSK), 353-374 (RLTK…MGSW), 376-397 (SITE…IEKL), 399-420 (NLEI…IGNL), 422-443 (KLRE…IGFL), 445-466 (HLTK…IGNL), 468-489 (SLQD…IGHL), 491-513 (SLKS…LALC), and 515-536 (SLEI…ITAG).

It belongs to the SHOC2 family. As to quaternary structure, interacts with let-60.

Acts as a Ras effector and participates in MAPK pathway activation. Probably acts as a scaffolding protein in a protein phosphatase complex that specifically dephosphorylates Raf kinase and stimulates Raf activity at specialized signaling complexes upon Ras activation. Required for vulval development. Involved in fluid homeostasis. Plays a role in nicotinic acetylcholine receptor (nAChR)-mediated sensitivity to nicotine. In Caenorhabditis elegans, this protein is Leucine-rich repeat protein soc-2 (soc-2).